We begin with the raw amino-acid sequence, 373 residues long: DNA replication and repair protein RecF (373 aa).

30 to 37 (GANGSGKT) lines the ATP pocket.

Belongs to the RecF family.

Its subcellular location is the cytoplasm. Functionally, the RecF protein is involved in DNA metabolism; it is required for DNA replication and normal SOS inducibility. RecF binds preferentially to single-stranded, linear DNA. It also seems to bind ATP. This chain is DNA replication and repair protein RecF, found in Marinobacter nauticus (strain ATCC 700491 / DSM 11845 / VT8) (Marinobacter aquaeolei).